Consider the following 294-residue polypeptide: Bifunctional protein FolD (294 aa).

Residues 164 to 166, serine 193, and isoleucine 234 each bind NADP(+); that span reads GRS.

The protein belongs to the tetrahydrofolate dehydrogenase/cyclohydrolase family. As to quaternary structure, homodimer.

It catalyses the reaction (6R)-5,10-methylene-5,6,7,8-tetrahydrofolate + NADP(+) = (6R)-5,10-methenyltetrahydrofolate + NADPH. It carries out the reaction (6R)-5,10-methenyltetrahydrofolate + H2O = (6R)-10-formyltetrahydrofolate + H(+). It participates in one-carbon metabolism; tetrahydrofolate interconversion. Catalyzes the oxidation of 5,10-methylenetetrahydrofolate to 5,10-methenyltetrahydrofolate and then the hydrolysis of 5,10-methenyltetrahydrofolate to 10-formyltetrahydrofolate. The sequence is that of Bifunctional protein FolD from Flavobacterium psychrophilum (strain ATCC 49511 / DSM 21280 / CIP 103535 / JIP02/86).